The primary structure comprises 337 residues: Ribosomal RNA small subunit methyltransferase H (337 aa).

S-adenosyl-L-methionine-binding positions include 35–37 (GGY), D54, F81, D102, and Q109. The segment at 286–316 (PVGPSEAEAAANPRARSAKLRAGERTDAPAP) is disordered. A compositionally biased stretch (low complexity) spans 289–300 (PSEAEAAANPRA).

This sequence belongs to the methyltransferase superfamily. RsmH family.

The protein resides in the cytoplasm. The catalysed reaction is cytidine(1402) in 16S rRNA + S-adenosyl-L-methionine = N(4)-methylcytidine(1402) in 16S rRNA + S-adenosyl-L-homocysteine + H(+). In terms of biological role, specifically methylates the N4 position of cytidine in position 1402 (C1402) of 16S rRNA. This chain is Ribosomal RNA small subunit methyltransferase H, found in Methylobacterium sp. (strain 4-46).